The following is a 407-amino-acid chain: Protein phosphatase methylesterase 1 (407 aa).

The interval 1–53 (MSDLQKSFAKSKLAKLPPEPPPIPESVADEDDDSGSSTETVTPSPVKQLFARP) is disordered. Catalysis depends on residues Ser185, Asp211, and His342. Positions 388–401 (GAGVPLGKAEGGTT) are enriched in gly residues. Residues 388–407 (GAGVPLGKAEGGTTGSFKRS) form a disordered region.

It belongs to the AB hydrolase superfamily.

The catalysed reaction is [phosphatase 2A protein]-C-terminal L-leucine methyl ester + H2O = [phosphatase 2A protein]-C-terminal L-leucine + methanol + H(+). Its function is as follows. Demethylates proteins that have been reversibly carboxymethylated. Demethylates the phosphatase PP2A catalytic subunit. This is Protein phosphatase methylesterase 1 (ppe1) from Emericella nidulans (strain FGSC A4 / ATCC 38163 / CBS 112.46 / NRRL 194 / M139) (Aspergillus nidulans).